The sequence spans 126 residues: Small ribosomal subunit protein uS12 (126 aa).

3-methylthioaspartic acid is present on Asp-89. Positions 99-126 (RGSLDTSGVNDRKQGRSKYGTKKPKDKK) are disordered. Residues 113–126 (GRSKYGTKKPKDKK) are compositionally biased toward basic residues.

It belongs to the universal ribosomal protein uS12 family. In terms of assembly, part of the 30S ribosomal subunit. Contacts proteins S8 and S17. May interact with IF1 in the 30S initiation complex.

Its function is as follows. With S4 and S5 plays an important role in translational accuracy. In terms of biological role, interacts with and stabilizes bases of the 16S rRNA that are involved in tRNA selection in the A site and with the mRNA backbone. Located at the interface of the 30S and 50S subunits, it traverses the body of the 30S subunit contacting proteins on the other side and probably holding the rRNA structure together. The combined cluster of proteins S8, S12 and S17 appears to hold together the shoulder and platform of the 30S subunit. This chain is Small ribosomal subunit protein uS12, found in Legionella pneumophila (strain Paris).